Consider the following 388-residue polypeptide: Ribonucleoside-diphosphate reductase subunit beta (388 aa).

The Fe cation site is built by D84, E115, and H118. Y122 is an active-site residue. E212, E247, and H250 together coordinate Fe cation.

It belongs to the ribonucleoside diphosphate reductase small chain family. As to quaternary structure, heterodimer of a large and a small subunit. It depends on Fe cation as a cofactor.

The catalysed reaction is a 2'-deoxyribonucleoside 5'-diphosphate + [thioredoxin]-disulfide + H2O = a ribonucleoside 5'-diphosphate + [thioredoxin]-dithiol. Its function is as follows. Provides the precursors necessary for DNA synthesis. Catalyzes the biosynthesis of deoxyribonucleotides from the corresponding ribonucleotides. This chain is Ribonucleoside-diphosphate reductase subunit beta (NRDB), found in Escherichia coli (Bacteriophage T4).